Here is an 83-residue protein sequence, read N- to C-terminus: Large ribosomal subunit protein eL14 (83 aa).

It belongs to the eukaryotic ribosomal protein eL14 family. As to quaternary structure, part of the 50S ribosomal subunit.

The chain is Large ribosomal subunit protein eL14 from Thermococcus kodakarensis (strain ATCC BAA-918 / JCM 12380 / KOD1) (Pyrococcus kodakaraensis (strain KOD1)).